A 614-amino-acid chain; its full sequence is Asparagine synthetase [glutamine-hydrolyzing] 3 (614 aa).

C2 serves as the catalytic For GATase activity. The region spanning 2–216 (CGITGWVDFK…PAHALTFSKD (215 aa)) is the Glutamine amidotransferase type-2 domain. Residues 50–54 (RLAVV), 77–79 (NGE), and D102 each bind L-glutamine. 377–378 (SG) contacts ATP.

It belongs to the asparagine synthetase family.

It catalyses the reaction L-aspartate + L-glutamine + ATP + H2O = L-asparagine + L-glutamate + AMP + diphosphate + H(+). Its pathway is amino-acid biosynthesis; L-asparagine biosynthesis; L-asparagine from L-aspartate (L-Gln route): step 1/1. Functionally, asparagine synthetase involved in sporulation. This is Asparagine synthetase [glutamine-hydrolyzing] 3 (asnO) from Bacillus subtilis (strain 168).